Reading from the N-terminus, the 271-residue chain is Solute carrier family 66 member 2 (271 aa).

Transmembrane regions (helical) follow at residues 7–27 (GWLL…AMVF), 49–69 (FSTH…LFWF), and 72–92 (HFES…LLML). The PQ-loop 1 domain occupies 14 to 80 (HQLVSWVAAG…RHFESPLLWQ (67 aa)). The residue at position 110 (Ser-110) is a Phosphoserine. The next 3 membrane-spanning stretches (helical) occupy residues 145 to 165 (DYVQ…YLSI), 168 to 188 (ALFV…LGVP), and 232 to 252 (VCGL…YAFA). The 56-residue stretch at 178–233 (AVLTEAMLGVPQLYRNYCHRSTEGMSLKMVLMWTSGDTFKTAYFLLNGAPLQFSVC) folds into the PQ-loop 2 domain.

The protein resides in the membrane. The sequence is that of Solute carrier family 66 member 2 (Slc66a2) from Mus musculus (Mouse).